We begin with the raw amino-acid sequence, 499 residues long: AP-1-like transcription factor CAP1 (499 aa).

The interval 1-64 (MTDIKRNFSD…RAYRERKERK (64 aa)) is disordered. Short sequence motifs (bipartite nuclear localization signal) lie at residues 20–27 (TKKLHVDS) and 44–51 (SKRTAQNR). One can recognise a bZIP domain in the interval 40 to 103 (TEPKSKRTAQ…DVLKNELAKY (64 aa)). A basic motif region spans residues 43 to 66 (KSKRTAQNRAAQRAYRERKERKMK). A coiled-coil region spans residues 49-105 (QNRAAQRAYRERKERKMKELEDKVRLLEDANVRALTETDFLRAQVDVLKNELAKYTG). Residues 68–75 (LEDKVRLL) form a leucine-zipper region. The segment at 104 to 215 (TGGSDFSDLN…SSTPLNDNLL (112 aa)) is disordered. Over residues 123 to 148 (HPNNHHSNVSTGTPHGSMSSSNSVAS) the composition is skewed to polar residues. 2 stretches are compositionally biased toward low complexity: residues 155-164 (SSASSVSNNS) and 186-215 (QQQQ…DNLL). A n-CRD region spans residues 254 to 261 (CVKLNEAC). Cystine bridges form between cysteine 254–cysteine 446 and cysteine 261–cysteine 477. Residues 408–442 (PEKQEKGKYEPPSTSKTTNNNEEEDKDEVVPAPPQ) are disordered. Over residues 417 to 427 (EPPSTSKTTNN) the composition is skewed to low complexity. Residues 446-477 (CSEIWDRITSHPKYTELDIDGLCNELKSKAKC) are c-CRD. Positions 462-469 (LDIDGLCN) match the Nuclear export signal motif.

It belongs to the bZIP family. YAP subfamily. Interacts with YBP1. Upon oxidative stress, is oxidated by the peroxidase GPX3 and stabilized by YBP1. Oxidative stress induces conformational changes through oxidation of cysteine residues, masking the nuclear export signal, thus abolishing nuclear export by CRM1/exportin 1. Post-translationally, phosphorylated in response to H(2)O(2).

It is found in the nucleus. The protein resides in the cytoplasm. Its function is as follows. Transcription activator involved in multidrug resistance, oxidative stress response, and redox homeostasis. Preferentially binds to promoters with the core binding site 5'-TTA[CG]TAA-3'. Involved in the oxidative stress response in via multiple pathways, including the cellular antioxidant defense system, carbohydrate metabolism and energy metabolism, protein degradation, ATP-dependent RNA helicase, and resistance pathways. The ability of the major systemic fungal pathogen of humans to sense and respond to reactive oxygen species, such as H(2)O(2) generated by the host immune system, is required for survival in the host and therefore virulence. Regulates the transcription of COR33, GLR1, GTO1, GTT1, GTT1, TRR1, TRX1, SOD1, CAT1, and the transcription regulator TSA1. Participates in the apoptosis by regulating the expression of the glutathione reductase gene and glutathione content. Also plays a role in the peroxide-mediated induction of MDR1 and other drug response genes such as PDR16, MDR1, FLU1, YCF1, and FCR1. Regulates trehalose accumulation which is important for the oxidative stress tolerance. Recruits ADA2 to its target promoters. Activity of CAP1 is controlled through oxidation of specific cysteine residues resulting in the alteration of its subcellular location. Oxidative stress induces nuclear accumulation and as a result CAP1 transcriptional activity. Nuclear export is restored when disulfide bonds are reduced by thioredoxin, whose expression is controlled by CAP1, providing a mechanism for negative autoregulation. The chain is AP-1-like transcription factor CAP1 from Candida albicans (strain SC5314 / ATCC MYA-2876) (Yeast).